The following is a 28-amino-acid chain: Aspartate aminotransferase, mitochondrial (28 aa).

This sequence belongs to the class-I pyridoxal-phosphate-dependent aminotransferase family. Homodimer. Requires pyridoxal 5'-phosphate as cofactor.

The protein resides in the mitochondrion matrix. The catalysed reaction is L-aspartate + 2-oxoglutarate = oxaloacetate + L-glutamate. Its function is as follows. Plays a key role in amino acid metabolism. Important for metabolite exchange between mitochondria and cytosol. The protein is Aspartate aminotransferase, mitochondrial of Catharanthus roseus (Madagascar periwinkle).